Reading from the N-terminus, the 729-residue chain is Cellulose synthase-like protein E1 (729 aa).

Helical transmembrane passes span 29–49 and 64–84; these read VIAY…IWFY and LIWF…VVTQ. Catalysis depends on residues D152 and D443. Transmembrane regions (helical) follow at residues 526–546, 553–573, 644–664, 680–700, and 709–729; these read LPVL…IPLF, WFIP…AEFL, MFLV…AAVA, QFVI…GMLL, and MSVT…LAFL.

This sequence belongs to the glycosyltransferase 2 family. Plant cellulose synthase-like E subfamily.

The protein resides in the golgi apparatus membrane. Its function is as follows. Thought to be a Golgi-localized beta-glycan synthase that polymerize the backbones of noncellulosic polysaccharides (hemicelluloses) of plant cell wall. In Arabidopsis thaliana (Mouse-ear cress), this protein is Cellulose synthase-like protein E1 (CSLE1).